A 202-amino-acid chain; its full sequence is Heat shock 22 kDa protein, mitochondrial (202 aa).

A mitochondrion-targeting transit peptide spans Met-1 to Ser-31. In terms of domain architecture, sHSP spans Val-94–Asp-202.

This sequence belongs to the small heat shock protein (HSP20) family.

It localises to the mitochondrion. The sequence is that of Heat shock 22 kDa protein, mitochondrial (HSP22) from Pisum sativum (Garden pea).